Here is a 263-residue protein sequence, read N- to C-terminus: Endonuclease 8 (263 aa).

Proline 2 acts as the Schiff-base intermediate with DNA in catalysis. The active-site Proton donor is the glutamate 3. Lysine 53 functions as the Proton donor; for beta-elimination activity in the catalytic mechanism. The DNA site is built by glutamine 70, arginine 125, and asparagine 169. An FPG-type zinc finger spans residues 229–263; sequence KVFHRDGELCERCGGIIEKTTLSSRPFYWCPGCQH. Arginine 253 serves as the catalytic Proton donor; for delta-elimination activity.

This sequence belongs to the FPG family. Requires Zn(2+) as cofactor.

The catalysed reaction is 2'-deoxyribonucleotide-(2'-deoxyribose 5'-phosphate)-2'-deoxyribonucleotide-DNA = a 3'-end 2'-deoxyribonucleotide-(2,3-dehydro-2,3-deoxyribose 5'-phosphate)-DNA + a 5'-end 5'-phospho-2'-deoxyribonucleoside-DNA + H(+). Its function is as follows. Involved in base excision repair of DNA damaged by oxidation or by mutagenic agents. Acts as a DNA glycosylase that recognizes and removes damaged bases. Has a preference for oxidized pyrimidines, such as thymine glycol, 5,6-dihydrouracil and 5,6-dihydrothymine. Has AP (apurinic/apyrimidinic) lyase activity and introduces nicks in the DNA strand. Cleaves the DNA backbone by beta-delta elimination to generate a single-strand break at the site of the removed base with both 3'- and 5'-phosphates. The polypeptide is Endonuclease 8 (Escherichia coli (strain SE11)).